Here is a 217-residue protein sequence, read N- to C-terminus: Uridine kinase (217 aa).

Residue 17-24 coordinates ATP; it reads GASASGKS.

Belongs to the uridine kinase family.

It is found in the cytoplasm. The catalysed reaction is uridine + ATP = UMP + ADP + H(+). It catalyses the reaction cytidine + ATP = CMP + ADP + H(+). Its pathway is pyrimidine metabolism; CTP biosynthesis via salvage pathway; CTP from cytidine: step 1/3. The protein operates within pyrimidine metabolism; UMP biosynthesis via salvage pathway; UMP from uridine: step 1/1. The polypeptide is Uridine kinase (Haemophilus ducreyi (strain 35000HP / ATCC 700724)).